The sequence spans 321 residues: Reticulon-2 (321 aa).

Disordered regions lie at residues 1 to 36 (MGHV…SPVT) and 65 to 85 (PPVR…PREE). The Reticulon domain maps to 134 to 321 (VKDLLYWRDI…TVKKPPAKQK (188 aa)). The next 2 helical transmembrane spans lie at 163–183 (FSVI…TLTL) and 250–270 (FLVI…ITVL).

Its subcellular location is the endoplasmic reticulum membrane. The protein resides in the sarcoplasmic reticulum membrane. The protein localises to the cell membrane. It is found in the sarcolemma. It localises to the T-tubule. Its subcellular location is the cytoplasm. The protein resides in the myofibril. The protein localises to the sarcomere. It is found in the z line. It localises to the cytoskeleton. Its function is as follows. Inhibits amyloid precursor protein processing, probably by blocking BACE1 activity. Enhances trafficking of the glutamate transporter SLC1A1/EAAC1 from the endoplasmic reticulum to the cell surface. Plays a role in the translocation of SLC2A4/GLUT4 from intracellular membranes to the cell membrane which facilitates the uptake of glucose into the cell. The sequence is that of Reticulon-2 from Xenopus tropicalis (Western clawed frog).